A 243-amino-acid polypeptide reads, in one-letter code: CRISPR-associated endoribonuclease Cas6 (243 aa).

Belongs to the CRISPR-associated endoribonuclease Cas6 family. In terms of assembly, part of the Csm effector complex that includes at least Cas10(1), Csm2(3), Csm3(5), Csm4(1); the presence of Csm5 and Cas6 may depend on the processing state of precursor crRNA. Csm with a precursor crRNA does not include Csm5, while Cas6, the enzyme probably involved in pre-crRNA processing, is found associated with a subset of the Csm complex that is probably in the process of pre-crRNA maturation. The Csm complex is elongated and slightly twisted with a maximal length of 215 Angstroms and a diameter of 75-80 Angstroms. It has been modeled to have a central protein filamant of Csm3 subunits along which the dsRNA helix of paired crRNA and target RNA binds. The filament is capped at one end by Cas10 and Csm4 and at the other end by Csm5; ssDNA is thought to bind to the N-terminal HD domain of Cas10.

Its function is as follows. CRISPR (clustered regularly interspaced short palindromic repeat) is an adaptive immune system that provides protection against mobile genetic elements (viruses, transposable elements and conjugative plasmids). CRISPR clusters contain spacers, sequences complementary to antecedent mobile elements, and target invading nucleic acids. CRISPR clusters are transcribed and processed into CRISPR RNA (crRNA). The type III-A Csm effector complex binds crRNA and acts as a crRNA-guided RNase, DNase and cyclic oligoadenylate synthase; binding of target RNA cognate to the crRNA is required for all activities. In a heterologous host this Csm effector complex restricts ssRNA phage MS2, suggesting it may target RNA viruses in vivo. Csm functions as a non-specific ssDNase. Base-pairing between crRNA and target RNA to form a ternary Csm complex activates a ssDNase activity; target RNA cleavage suppresses the ssDNase, a temporal control that prevents uncontrolled DNA degradation. Viral RNA transcripts probably tether the Csm complex to the viral genome, recruiting Cas10 ssDNA activity which is able to degrade DNA in the transcription bubble, spatially controlling the DNase activity. In terms of biological role, this protein processes pre-crRNA into individual crRNA units. The sequence is that of CRISPR-associated endoribonuclease Cas6 from Streptococcus thermophilus.